The sequence spans 783 residues: MAPPQAPVQPPKRRRIGVLTSGGDAPGMNGVVRAVVRMAIHSDCEAFAVYEGYEGLVNGGDMIRQLHWEDVRGWLSRGGTLIGSARCMTFRERPGRLRAAKNMVLRGIDALVVCGGDGSLTGADVFRSEWPGLLKELVETGELTEEQVKPYQILNIVGLVGSIDNDMSGTDATIGCYSSLTRICDAVDDVFDTAFSHQRGFVIEVMGRHCGWLALMSAISTGADWLFVPEMPPKDGWEDDMCAIITKNRKERGKRRTIVIVAEGAQDRHLNKISSSKIKDILTERLNLDTRVTVLGHTQRGGAACAYDRWLSTLQGVEAVRAVLDMKPEAPSPVITIRENKILRMPLMDAVQHTKTVTKHIQNKEFAEAMALRDSEFKEYHFSYINTSTPDHPKLLLPENKRMRIGIIHVGAPAGGMNQATRAAVAYCLTRGHTPLAIHNGFPGLCRHYDDTPICSVREVAWQESDAWVNEGGSDIGTNRGLPGDDLATTAKSFKKFGFDALFVVGGFEAFTAVSQLRQAREKYPEFKIPMTVLPATISNNVPGTEYSLGSDTCLNTLIDFCDAIRQSASSSRRRVFVIETQGGKSGYIATTAGLSVGAVAVYIPEEGIDIKMLARDIDFLRDNFARDKGANRAGKIILRNECASSTYTTQVVADMIKEEAKGRFESRAAVPGHFQQGGKPSPMDRIRALRMATKCMLHLESYAGKSADEIAADELSASVIGIKGSQVLFSPMGGETGLEATETDWARRRPKTEFWLELQDTVNILSGRASVNNATWSCYENA.

A compositionally biased stretch (pro residues) spans 1-10 (MAPPQAPVQP). Positions 1-20 (MAPPQAPVQPPKRRRIGVLT) are disordered. Positions 1–389 (MAPPQAPVQP…YHFSYINTST (389 aa)) are N-terminal catalytic PFK domain 1. Residues Gly23, 86–87 (RC), and 116–119 (GDGS) contribute to the ATP site. Asp117 serves as a coordination point for Mg(2+). Substrate is bound by residues 162-164 (SID), Arg199, 206-208 (MGR), Glu263, Arg291, and 297-300 (HTQR). Residue Asp164 is the Proton acceptor of the active site. The interval 390–403 (PDHPKLLLPENKRM) is interdomain linker. Residues 404–783 (RIGIIHVGAP…NATWSCYENA (380 aa)) form a C-terminal regulatory PFK domain 2 region. Beta-D-fructose 2,6-bisphosphate is bound by residues Arg480, 537–541 (TISNN), Arg575, 582–584 (QGG), Glu642, Arg668, 674–677 (HFQQ), and Arg749.

This sequence belongs to the phosphofructokinase type A (PFKA) family. ATP-dependent PFK group I subfamily. Eukaryotic two domain clade 'E' sub-subfamily. As to quaternary structure, homotetramer. Mg(2+) is required as a cofactor.

It is found in the cytoplasm. The enzyme catalyses beta-D-fructose 6-phosphate + ATP = beta-D-fructose 1,6-bisphosphate + ADP + H(+). It functions in the pathway carbohydrate degradation; glycolysis; D-glyceraldehyde 3-phosphate and glycerone phosphate from D-glucose: step 3/4. With respect to regulation, allosterically activated by ADP, AMP, or fructose 2,6-bisphosphate, and allosterically inhibited by ATP or citrate. Functionally, catalyzes the phosphorylation of D-fructose 6-phosphate to fructose 1,6-bisphosphate by ATP, the first committing step of glycolysis. The protein is ATP-dependent 6-phosphofructokinase (pfkA) of Aspergillus niger.